Reading from the N-terminus, the 311-residue chain is Solute carrier family 25 member 48 (311 aa).

Solcar repeat units lie at residues 3–86, 101–205, and 214–301; these read SFQL…TQRF, RTLS…LSEW, and PSPC…SLQA. Helical transmembrane passes span 9 to 29, 61 to 81, 107 to 127, 189 to 209, 217 to 237, and 277 to 295; these read FAAG…LDTV, GMSF…GVFS, LLAS…VDLI, VPGY…ITPE, CAVW…ATPM, and ITVN…FLGY.

It belongs to the mitochondrial carrier (TC 2.A.29) family.

The protein resides in the mitochondrion inner membrane. This is Solute carrier family 25 member 48 (SLC25A48) from Homo sapiens (Human).